A 170-amino-acid chain; its full sequence is Ankyrin repeat-containing protein C105.02c (170 aa).

ANK repeat units follow at residues 46 to 76 and 81 to 116; these read LGND…NLNN and TGDT…DPLL. Positions 150-170 are disordered; it reads SADVVADDDDEEEGSGESDEE. Acidic residues predominate over residues 154–170; the sequence is VADDDDEEEGSGESDEE.

Its subcellular location is the cytoplasm. It localises to the nucleus. The sequence is that of Ankyrin repeat-containing protein C105.02c from Schizosaccharomyces pombe (strain 972 / ATCC 24843) (Fission yeast).